A 316-amino-acid chain; its full sequence is Putative mannose-6-phosphate isomerase YvyI (316 aa).

Zn(2+) is bound by residues histidine 98, glutamate 116, and histidine 173. Arginine 193 is an active-site residue.

This sequence belongs to the mannose-6-phosphate isomerase type 1 family. The cofactor is Zn(2+).

The catalysed reaction is D-mannose 6-phosphate = D-fructose 6-phosphate. The sequence is that of Putative mannose-6-phosphate isomerase YvyI (yvyI) from Bacillus subtilis (strain 168).